Consider the following 629-residue polypeptide: Flap endonuclease GEN-like 1 (629 aa).

Residues 1 to 87 form an N-domain region; sequence MGVGGSFWDL…DGQPSPLKSQ (87 aa). An XPG-N domain region spans residues 2 to 98; that stretch reads GVGGSFWDLL…RAARFFRGSG (97 aa). 7 residues coordinate Mg(2+): Asp31, Asp78, Glu148, Glu150, Asp169, Asp171, and Asp221. The segment at 136–221 is XPG-I domain; the sequence is EYLGMPVLRA…VAMALLVGSD (86 aa). Residues 136–225 are I-domain; that stretch reads EYLGMPVLRA…LLVGSDHDLH (90 aa). A 5'-3' exonuclease domain region spans residues 221 to 421; that stretch reads DHDLHGVPGF…MLPMLSTIYL (201 aa). The tract at residues 594-617 is disordered; sequence KKGLSGDSGKDGSRKSSDVDLSKN. A compositionally biased stretch (basic and acidic residues) spans 601-614; that stretch reads SGKDGSRKSSDVDL.

The protein belongs to the XPG/RAD2 endonuclease family. GEN subfamily. As to quaternary structure, monomer. Interacts with PCNA. PCNA stimulates the nuclease activity without altering cleavage specificity. Requires Mg(2+) as cofactor. Highly expressed in anthers. Expressed in roots and leaves.

It is found in the nucleus. Its function is as follows. Endonuclease which cleaves flap structures at the junction between single-stranded DNA and double-stranded DNA. Possesses both single-stranded and double-stranded DNA-binding activities. Involved in early microspore development, but does not alter meiosis or tapetal cells development. Possesses Holliday junction (HJ) resolvase activity in vitro. Cleaves HJ at symmetrically related sites of the branch point. This Oryza sativa subsp. japonica (Rice) protein is Flap endonuclease GEN-like 1.